The chain runs to 132 residues: Large ribosomal subunit protein uL14 (132 aa).

It belongs to the universal ribosomal protein uL14 family. Part of the 50S ribosomal subunit. Forms a cluster with proteins L3 and L24e, part of which may contact the 16S rRNA in 2 intersubunit bridges.

Its function is as follows. Binds to 23S rRNA. Forms part of two intersubunit bridges in the 70S ribosome. The chain is Large ribosomal subunit protein uL14 from Archaeoglobus fulgidus (strain ATCC 49558 / DSM 4304 / JCM 9628 / NBRC 100126 / VC-16).